We begin with the raw amino-acid sequence, 359 residues long: Protein RecA (359 aa).

69–76 provides a ligand contact to ATP; that stretch reads GPESSGKT. The interval 337 to 359 is disordered; it reads SANSVAKASEEDEEEEVDLEPEE. Over residues 346 to 359 the composition is skewed to acidic residues; that stretch reads EEDEEEEVDLEPEE.

Belongs to the RecA family.

It localises to the cytoplasm. Its function is as follows. Can catalyze the hydrolysis of ATP in the presence of single-stranded DNA, the ATP-dependent uptake of single-stranded DNA by duplex DNA, and the ATP-dependent hybridization of homologous single-stranded DNAs. It interacts with LexA causing its activation and leading to its autocatalytic cleavage. In Nostoc punctiforme (strain ATCC 29133 / PCC 73102), this protein is Protein RecA.